A 234-amino-acid chain; its full sequence is Large ribosomal subunit protein uL1 (234 aa).

Belongs to the universal ribosomal protein uL1 family. In terms of assembly, part of the 50S ribosomal subunit.

Its function is as follows. Binds directly to 23S rRNA. The L1 stalk is quite mobile in the ribosome, and is involved in E site tRNA release. Protein L1 is also a translational repressor protein, it controls the translation of the L11 operon by binding to its mRNA. This is Large ribosomal subunit protein uL1 from Aliivibrio fischeri (strain ATCC 700601 / ES114) (Vibrio fischeri).